The primary structure comprises 205 residues: Small ribosomal subunit protein uS4 (205 aa).

The segment at 19 to 45 (IWGRPKSPVNRREYGPGQHGQRRKGKL) is disordered. The 64-residue stretch at 94–157 (SRLDAVVYRA…KQLVIVLEAV (64 aa)) folds into the S4 RNA-binding domain.

Belongs to the universal ribosomal protein uS4 family. As to quaternary structure, part of the 30S ribosomal subunit. Contacts protein S5. The interaction surface between S4 and S5 is involved in control of translational fidelity.

One of the primary rRNA binding proteins, it binds directly to 16S rRNA where it nucleates assembly of the body of the 30S subunit. In terms of biological role, with S5 and S12 plays an important role in translational accuracy. The sequence is that of Small ribosomal subunit protein uS4 from Brucella anthropi (strain ATCC 49188 / DSM 6882 / CCUG 24695 / JCM 21032 / LMG 3331 / NBRC 15819 / NCTC 12168 / Alc 37) (Ochrobactrum anthropi).